We begin with the raw amino-acid sequence, 841 residues long: Toll-like receptor 4 (841 aa).

The first 23 residues, 1 to 23 (MMARARLAAALIPATAILSCLRT), serve as a signal peptide directing secretion. The Extracellular segment spans residues 24 to 632 (ESWDPCVQVV…FRNATCQLSK (609 aa)). Cys-29 and Cys-40 are disulfide-bonded. Asn-35 and Asn-73 each carry an N-linked (GlcNAc...) asparagine glycan. 7 LRR repeats span residues 55–76 (STKM…NFSS), 79–100 (ELQV…TFQG), 103–124 (HLST…AFSG), 127–148 (SLQK…PIGH), 151–172 (NLKE…EYFS), 176–197 (NLEH…DVKV), and 205–225 (NLSL…TFKE). 4 N-linked (GlcNAc...) asparagine glycosylation sites follow: Asn-205, Asn-238, Asn-282, and Asn-309. A disulfide bridge connects residues Cys-281 and Cys-306. LRR repeat units lie at residues 352–373 (SLKK…FQLP), 374–394 (SLQY…CSHT), 400–422 (NLKH…MGLE), 423–444 (QLEH…SAFL), 448–469 (NLRY…IFTG), 472–495 (SLQT…FTEL), 497–518 (NLTV…AFHS), 521–542 (SLQV…LYEP), and 545–568 (SLRI…QNLP). A disulfide bridge connects residues Cys-390 and Cys-391. 2 N-linked (GlcNAc...) asparagine glycosylation sites follow: Asn-497 and Asn-526. Asn-575 carries an N-linked (GlcNAc...) asparagine glycan. Positions 579–630 (NAFACVCEHQSFLQWVKDQRQLLVGAEQMMCAEPLDMEDMPVLSFRNATCQL) constitute an LRRCT domain. 2 cysteine pairs are disulfide-bonded: Cys-583-Cys-609 and Cys-585-Cys-628. N-linked (GlcNAc...) asparagine glycosylation is present at Asn-625. Residues 633 to 653 (TIISVSVVTVLLVSVVGVLVY) form a helical membrane-spanning segment. Residues 654–841 (KFYFHLMLLA…TNPQEATTST (188 aa)) are Cytoplasmic-facing. In terms of domain architecture, TIR spans 673 to 816 (SIYDAFVIYS…VFWRRLRKAL (144 aa)). A disordered region spans residues 820–841 (KPQSPEGTADAETNPQEATTST). The segment covering 830–841 (AETNPQEATTST) has biased composition (polar residues).

Belongs to the Toll-like receptor family. In terms of assembly, belongs to the lipopolysaccharide (LPS) receptor, a multi-protein complex containing at least CD14, LY96 and TLR4. Binding to bacterial LPS leads to homodimerization. Interacts with LY96 via the extracellular domain. Interacts with MYD88 and TIRAP via their respective TIR domains. Interacts with TICAM2. Interacts with NOX4. Interacts with CNPY3 and HSP90B1; this interaction is required for proper folding in the endoplasmic reticulum. Interacts with MAP3K21; this interaction leads to negative regulation of TLR4 signaling. Interacts with CD36, following CD36 stimulation by oxLDL or amyloid-beta 42, and forms a heterodimer with TLR6. The trimeric complex is internalized and triggers inflammatory response. LYN kinase activity facilitates TLR4-TLR6 heterodimerization and signal initiation. Interacts with TICAM1 in response to LPS in a WDFY1-dependent manner. Interacts with WDFY1 in response to LPS. Interacts with SMPDL3B. Interacts with CEACAM1; upon lipopolysaccharide stimulation, forms a complex including TLR4 and the phosphorylated form of SYK and CEACAM1, which in turn, recruits PTPN6 that dephosphorylates SYK, reducing the production of reactive oxygen species (ROS) and lysosome disruption, which in turn, reduces the activity of the inflammasome. Interacts with RFTN1; the interaction occurs in response to lipopolysaccharide stimulation. Interacts with SCIMP; the interaction occurs in response to lipopolysaccharide stimulation and is enhanced by phosphorylation of SCIMP by LYN. This interaction facilitates the phosphorylation of TLR4 by LYN which elicits a selective cytokine response in macrophages. Interacts with TRAF3IP3. Interacts with TREM1; this interaction enhances TLR4-mediated inflammatory response. Interacts with ZG16B/PAUF. Interacts with CD82; this interaction inhibits TLR4-mediated signaling pathway. In terms of processing, phosphorylated on tyrosine residues by LYN after binding lipopolysaccharide. Post-translationally, ubiquitinated by RNF128 via 'Lys-28'-linked polyubiquitin chains, leading to proteasomal degradation.

Its subcellular location is the cell membrane. It is found in the early endosome. The protein localises to the cell projection. The protein resides in the ruffle. Its function is as follows. Transmembrane receptor that functions as a pattern recognition receptor recognizing pathogen- and damage-associated molecular patterns (PAMPs and DAMPs) to induce innate immune responses via downstream signaling pathways. At the plasma membrane, cooperates with LY96 to mediate the innate immune response to bacterial lipopolysaccharide (LPS). Also involved in LPS-independent inflammatory responses triggered by free fatty acids, such as palmitate, and Ni(2+). Mechanistically, acts via MYD88, TIRAP and TRAF6, leading to NF-kappa-B activation, cytokine secretion and the inflammatory response. Alternatively, CD14-mediated TLR4 internalization via endocytosis is associated with the initiation of a MYD88-independent signaling via the TICAM1-TBK1-IRF3 axis leading to type I interferon production. In addition to the secretion of proinflammatory cytokines, initiates the activation of NLRP3 inflammasome and formation of a positive feedback loop between autophagy and NF-kappa-B signaling cascade. In complex with TLR6, promotes inflammation in monocytes/macrophages by associating with TLR6 and the receptor CD86. Upon ligand binding, such as oxLDL or amyloid-beta 42, the TLR4:TLR6 complex is internalized and triggers inflammatory response, leading to NF-kappa-B-dependent production of CXCL1, CXCL2 and CCL9 cytokines, via MYD88 signaling pathway, and CCL5 cytokine, via TICAM1 signaling pathway. In myeloid dendritic cells, vesicular stomatitis virus glycoprotein G but not LPS promotes the activation of IRF7, leading to type I IFN production in a CD14-dependent manner. This chain is Toll-like receptor 4 (TLR4), found in Bos taurus (Bovine).